The following is a 110-amino-acid chain: Snake venom vascular endothelial growth factor toxin (110 aa).

Residue Gln1 is modified to Pyrrolidone carboxylic acid. 3 disulfide bridges follow: Cys14–Cys56, Cys45–Cys91, and Cys49–Cys93.

This sequence belongs to the PDGF/VEGF growth factor family. Snake venom VEGF subfamily. In terms of assembly, homodimer; disulfide-linked. Expressed by the venom gland.

The protein resides in the secreted. In terms of biological role, snake venom VEGFs that may contribute to venom dispersion and prey subjugation by inducing vascular permeability and hypotension. This protein potently stimulates dermal human microvascular endothelial cell (dHMVEC) proliferation in a VEGFR-2 dependent manner. This stimulatory effect is correlated with activation of the MAPK Erk1/2 signaling pathway. It also appears to be a chemoattractant for migration of these cells and stimulates their radial migration in a collagen gel. In vivo, it induces angiogenesis in a Japanese quail assay. This pro-angiogenic effect may also be related to its interaction with VEGFR-2. In addition, it may induce an increase in capillary permeability after intradermal injection, as well as a drastic hypotensive effect after intravenous injection. The hypotension is mediated by nitric oxide (NO), which is produced by VEGF-activated endothelium NO synthase. This Daboia palaestinae (Palestine viper) protein is Snake venom vascular endothelial growth factor toxin.